The sequence spans 334 residues: Phosphoribosylformylglycinamidine cyclo-ligase (334 aa).

Belongs to the AIR synthase family.

It localises to the cytoplasm. The catalysed reaction is 2-formamido-N(1)-(5-O-phospho-beta-D-ribosyl)acetamidine + ATP = 5-amino-1-(5-phospho-beta-D-ribosyl)imidazole + ADP + phosphate + H(+). It participates in purine metabolism; IMP biosynthesis via de novo pathway; 5-amino-1-(5-phospho-D-ribosyl)imidazole from N(2)-formyl-N(1)-(5-phospho-D-ribosyl)glycinamide: step 2/2. This Thermococcus kodakarensis (strain ATCC BAA-918 / JCM 12380 / KOD1) (Pyrococcus kodakaraensis (strain KOD1)) protein is Phosphoribosylformylglycinamidine cyclo-ligase.